Reading from the N-terminus, the 875-residue chain is Probable inorganic carbon transporter subunit DabA (875 aa).

Residues Cys380, Asp382, His563, and Cys578 each contribute to the Zn(2+) site.

Belongs to the inorganic carbon transporter (TC 9.A.2) DabA family. Forms a complex with DabB. Zn(2+) is required as a cofactor.

It localises to the cell membrane. Part of an energy-coupled inorganic carbon pump. The sequence is that of Probable inorganic carbon transporter subunit DabA from Geobacillus thermodenitrificans (strain NG80-2).